A 427-amino-acid chain; its full sequence is 3-phosphoshikimate 1-carboxyvinyltransferase (427 aa).

3-phosphoshikimate contacts are provided by K20, S21, and R25. K20 contributes to the phosphoenolpyruvate binding site. Phosphoenolpyruvate contacts are provided by G92 and R120. S166, Q168, D312, and K339 together coordinate 3-phosphoshikimate. Q168 lines the phosphoenolpyruvate pocket. D312 functions as the Proton acceptor in the catalytic mechanism. R343 and R385 together coordinate phosphoenolpyruvate.

The protein belongs to the EPSP synthase family. In terms of assembly, monomer.

The protein resides in the cytoplasm. It catalyses the reaction 3-phosphoshikimate + phosphoenolpyruvate = 5-O-(1-carboxyvinyl)-3-phosphoshikimate + phosphate. Its pathway is metabolic intermediate biosynthesis; chorismate biosynthesis; chorismate from D-erythrose 4-phosphate and phosphoenolpyruvate: step 6/7. Catalyzes the transfer of the enolpyruvyl moiety of phosphoenolpyruvate (PEP) to the 5-hydroxyl of shikimate-3-phosphate (S3P) to produce enolpyruvyl shikimate-3-phosphate and inorganic phosphate. In Streptococcus equi subsp. zooepidemicus (strain H70), this protein is 3-phosphoshikimate 1-carboxyvinyltransferase.